Here is a 913-residue protein sequence, read N- to C-terminus: Protein translocase subunit SecA (913 aa).

Residues Gln-87, 105 to 109, and Asp-512 contribute to the ATP site; that span reads GEGKT. Zn(2+)-binding residues include Cys-897, Cys-899, Cys-908, and His-909.

Belongs to the SecA family. Monomer and homodimer. Part of the essential Sec protein translocation apparatus which comprises SecA, SecYEG and auxiliary proteins SecDF-YajC and YidC. Requires Zn(2+) as cofactor.

The protein localises to the cell inner membrane. It is found in the cytoplasm. It catalyses the reaction ATP + H2O + cellular proteinSide 1 = ADP + phosphate + cellular proteinSide 2.. Part of the Sec protein translocase complex. Interacts with the SecYEG preprotein conducting channel. Has a central role in coupling the hydrolysis of ATP to the transfer of proteins into and across the cell membrane, serving both as a receptor for the preprotein-SecB complex and as an ATP-driven molecular motor driving the stepwise translocation of polypeptide chains across the membrane. The sequence is that of Protein translocase subunit SecA from Pseudomonas fluorescens (strain ATCC BAA-477 / NRRL B-23932 / Pf-5).